We begin with the raw amino-acid sequence, 304 residues long: Phytol kinase 1, chloroplastic (304 aa).

The N-terminal 59 residues, 1-59, are a transit peptide targeting the chloroplast; sequence MAATLPLSPINHQLCRFGNNSLTTHRFCSPGFLISSPCFIGLTGMGSATQLRARRSLIS. The next 6 helical transmembrane spans lie at 71 to 91, 105 to 125, 129 to 149, 167 to 187, 191 to 211, and 227 to 247; these read VGAT…FESL, LVHI…SGST, YFAA…GLSI, ELLK…VFFW, PIGM…DIMG, and WAGS…LLYY.

This sequence belongs to the polyprenol kinase family.

The protein resides in the plastid. It is found in the chloroplast membrane. The catalysed reaction is phytol + CTP = phytyl phosphate + CDP + H(+). Its pathway is cofactor biosynthesis; tocopherol biosynthesis. Its function is as follows. Kinase involved in the activation and reutilization of phytol from chlorophyll degradation in plant metabolism, including tocopherol biosynthesis. Catalyzes the conversion of phytol to phytol monophosphate (PMP) in the presence of CTP or UTP. No activity with ATP or GTP as phosphoryl donor. In Arabidopsis thaliana (Mouse-ear cress), this protein is Phytol kinase 1, chloroplastic.